A 1140-amino-acid polypeptide reads, in one-letter code: uncharacterized protein (1140 aa).

Disordered stretches follow at residues 1–49 (MGSS…TSPE), 97–243 (SSDI…STIS), 280–427 (TSSS…KSSV), 512–541 (ASST…DLSK), 702–747 (FSTP…STAS), 916–1059 (CPEK…PIGR), and 1080–1103 (LSSS…GTSS). Positions 105–129 (VNDVESSTSGPSNSYSALSSTNAQL) are enriched in polar residues. 3 stretches are compositionally biased toward low complexity: residues 130-154 (SSST…TSSS), 172-214 (TTAS…TTSD), and 221-243 (SSST…STIS). A compositionally biased stretch (polar residues) spans 516 to 528 (LGSKVSSSNSRMA). Composition is skewed to low complexity over residues 529–541 (TSKT…DLSK) and 703–718 (STPE…VTSE). Residues 719 to 733 (APSTVSSMTTSAPFI) are compositionally biased toward polar residues. The segment covering 734–747 (NNSTSARPSPSTAS) has biased composition (low complexity). Residues 949–961 (SFKDMKTSQETKK) show a composition bias toward basic and acidic residues. The span at 977 to 997 (EKTSPTTKASPSTSPSESKAA) shows a compositional bias: low complexity. 3 stretches are compositionally biased toward polar residues: residues 998 to 1023 (GNTS…STSV), 1031 to 1055 (TKNS…STES), and 1089 to 1103 (RSTT…GTSS).

This is an uncharacterized protein from Saccharomyces cerevisiae (strain ATCC 204508 / S288c) (Baker's yeast).